Here is a 431-residue protein sequence, read N- to C-terminus: Ribosome assembly protein SQT1 (431 aa).

WD repeat units follow at residues 63 to 102 (KHTDSVFAIGHHPNLPLVCTGGGDNLAHLWTSHSQPPKFA), 107 to 146 (GYGESVISCSFTSEGGFLVTADMSGKVLVHMGQKGGAQWK), 149 to 192 (SQMQ…GSLE), 199 to 243 (VHQQ…QLFK), 309 to 348 (ELDASIESISWSSKFSLMAIGLVCGEILLYDTSAWRVRHK), and 350 to 387 (VLEDSVTKLMFDNDDLFASCINGKVYQFNARTGQEKFV).

Interacts strongly with QSR1. Part of an oligomeric protein complex that is loosely associated with ribosomes.

Its function is as follows. May be involved in the late step of 60S ribosomal subunit assembly or modification in the cytoplasm. This Saccharomyces cerevisiae (strain ATCC 204508 / S288c) (Baker's yeast) protein is Ribosome assembly protein SQT1 (SQT1).